The primary structure comprises 637 residues: ATP-dependent rRNA helicase SPB4 (637 aa).

The Q motif motif lies at 10–38 (WENLRVDLEPWLKDAIRSLNYPTMTPVQA). The 196-residue stretch at 41–236 (IPLLSGNKDV…RTGMNNPVKL (196 aa)) folds into the Helicase ATP-binding domain. 54 to 61 (AVTGSGKT) is a binding site for ATP. The short motif at 184–187 (DEAD) is the DEAD box element. The 179-residue stretch at 266-444 (KLTTMLQMLR…KFQKKLRKYM (179 aa)) folds into the Helicase C-terminal domain. Residues 528–597 (SAEKARLENL…QLEAEQERGG (70 aa)) are a coiled coil. The tract at residues 554 to 637 (LKVKNEAWSS…GVLQGSFDDL (84 aa)) is disordered. 2 stretches are compositionally biased toward basic and acidic residues: residues 564–576 (KTEK…ERKE) and 583–598 (EAIE…RGGL). A compositionally biased stretch (gly residues) spans 621 to 630 (NGGGGGGGVL).

Belongs to the DEAD box helicase family. DDX55/SPB4 subfamily. Component of pre-60S ribosomal complexes.

It is found in the nucleus. The protein resides in the nucleolus. It carries out the reaction ATP + H2O = ADP + phosphate + H(+). In terms of biological role, ATP-binding RNA helicase involved in the biogenesis of 60S ribosomal subunits. Binds 90S pre-ribosomal particles and dissociates from pre-60S ribosomal particles after processing of 27SB pre-rRNA. Required for the normal formation of 18S rRNA through the processing of pre-rRNAs at sites A0, A1 and A2, and the normal formation of 25S and 5.8S rRNAs through the processing of pre-rRNAs at sites C1 and C2. This is ATP-dependent rRNA helicase SPB4 from Lodderomyces elongisporus (strain ATCC 11503 / CBS 2605 / JCM 1781 / NBRC 1676 / NRRL YB-4239) (Yeast).